The chain runs to 250 residues: NAD(P)H-quinone oxidoreductase subunit K (250 aa).

[4Fe-4S] cluster contacts are provided by C60, C61, C125, and C156. The tract at residues 230-250 (ELNTPEIDVSPASQSSSTYES) is disordered. The segment covering 240-250 (PASQSSSTYES) has biased composition (polar residues).

Belongs to the complex I 20 kDa subunit family. NDH-1 can be composed of about 15 different subunits; different subcomplexes with different compositions have been identified which probably have different functions. Requires [4Fe-4S] cluster as cofactor.

Its subcellular location is the cellular thylakoid membrane. The enzyme catalyses a plastoquinone + NADH + (n+1) H(+)(in) = a plastoquinol + NAD(+) + n H(+)(out). It carries out the reaction a plastoquinone + NADPH + (n+1) H(+)(in) = a plastoquinol + NADP(+) + n H(+)(out). NDH-1 shuttles electrons from an unknown electron donor, via FMN and iron-sulfur (Fe-S) centers, to quinones in the respiratory and/or the photosynthetic chain. The immediate electron acceptor for the enzyme in this species is believed to be plastoquinone. Couples the redox reaction to proton translocation, and thus conserves the redox energy in a proton gradient. Cyanobacterial NDH-1 also plays a role in inorganic carbon-concentration. In Prochlorococcus marinus (strain MIT 9313), this protein is NAD(P)H-quinone oxidoreductase subunit K.